A 679-amino-acid chain; its full sequence is Glycine--tRNA ligase beta subunit (679 aa).

The protein belongs to the class-II aminoacyl-tRNA synthetase family. As to quaternary structure, tetramer of two alpha and two beta subunits.

It localises to the cytoplasm. The enzyme catalyses tRNA(Gly) + glycine + ATP = glycyl-tRNA(Gly) + AMP + diphosphate. The polypeptide is Glycine--tRNA ligase beta subunit (Streptococcus uberis (strain ATCC BAA-854 / 0140J)).